The primary structure comprises 445 residues: Xylose isomerase (445 aa).

Active-site residues include His-107 and Asp-110. Mg(2+) contacts are provided by Glu-238, Glu-274, His-277, Asp-302, Asp-313, Asp-315, and Asp-345.

The protein belongs to the xylose isomerase family. As to quaternary structure, homotetramer. The cofactor is Mg(2+).

The protein localises to the cytoplasm. It carries out the reaction alpha-D-xylose = alpha-D-xylulofuranose. The protein is Xylose isomerase (xylA) of Bacillus spizizenii (strain ATCC 23059 / NRRL B-14472 / W23) (Bacillus subtilis subsp. spizizenii).